A 303-amino-acid polypeptide reads, in one-letter code: Protoheme IX farnesyltransferase 1 (303 aa).

9 consecutive transmembrane segments (helical) span residues 18 to 38 (PGIIMGNLISVAGGFLLAAQG), 42 to 62 (LTLMFATMIGLSLVVASGCAV), 91 to 111 (AVLSFGIGLGIIGFAMLAIFT), 114 to 134 (LAVLFAAIGYVVYVGVYSLYM), 139 to 159 (VYGTLVGSFSGAVPPVVGYCA), 169 to 189 (VILLLMFSLWQMPHSYAIAIF), 213 to 233 (LHIVLYIAVFAVVSALLPLAG), 235 to 255 (TGIAFMAVTFATSLWWLAMAL), and 274 to 294 (FSIITITALSVTMALDFQVVA).

Belongs to the UbiA prenyltransferase family. Protoheme IX farnesyltransferase subfamily.

Its subcellular location is the cell inner membrane. It catalyses the reaction heme b + (2E,6E)-farnesyl diphosphate + H2O = Fe(II)-heme o + diphosphate. Its pathway is porphyrin-containing compound metabolism; heme O biosynthesis; heme O from protoheme: step 1/1. In terms of biological role, converts heme B (protoheme IX) to heme O by substitution of the vinyl group on carbon 2 of heme B porphyrin ring with a hydroxyethyl farnesyl side group. In Shewanella frigidimarina (strain NCIMB 400), this protein is Protoheme IX farnesyltransferase 1.